A 378-amino-acid polypeptide reads, in one-letter code: Queuine tRNA-ribosyltransferase (378 aa).

Aspartate 90 acts as the Proton acceptor in catalysis. Substrate-binding positions include 90–94, aspartate 144, glutamine 188, and glycine 220; that span reads DSGGF. Positions 251 to 257 are RNA binding; that stretch reads GVGTPED. The active-site Nucleophile is the aspartate 270. Positions 275 to 279 are RNA binding; important for wobble base 34 recognition; it reads TRNAR. Zn(2+) is bound by residues cysteine 308, cysteine 310, cysteine 313, and histidine 339.

The protein belongs to the queuine tRNA-ribosyltransferase family. Homodimer. Within each dimer, one monomer is responsible for RNA recognition and catalysis, while the other monomer binds to the replacement base PreQ1. The cofactor is Zn(2+).

It carries out the reaction 7-aminomethyl-7-carbaguanine + guanosine(34) in tRNA = 7-aminomethyl-7-carbaguanosine(34) in tRNA + guanine. The protein operates within tRNA modification; tRNA-queuosine biosynthesis. Its function is as follows. Catalyzes the base-exchange of a guanine (G) residue with the queuine precursor 7-aminomethyl-7-deazaguanine (PreQ1) at position 34 (anticodon wobble position) in tRNAs with GU(N) anticodons (tRNA-Asp, -Asn, -His and -Tyr). Catalysis occurs through a double-displacement mechanism. The nucleophile active site attacks the C1' of nucleotide 34 to detach the guanine base from the RNA, forming a covalent enzyme-RNA intermediate. The proton acceptor active site deprotonates the incoming PreQ1, allowing a nucleophilic attack on the C1' of the ribose to form the product. After dissociation, two additional enzymatic reactions on the tRNA convert PreQ1 to queuine (Q), resulting in the hypermodified nucleoside queuosine (7-(((4,5-cis-dihydroxy-2-cyclopenten-1-yl)amino)methyl)-7-deazaguanosine). The chain is Queuine tRNA-ribosyltransferase from Nautilia profundicola (strain ATCC BAA-1463 / DSM 18972 / AmH).